The following is a 173-amino-acid chain: Small ribosomal subunit protein uS5 (173 aa).

In terms of domain architecture, S5 DRBM spans 18 to 81; it reads LREKMIAVNR…EQARRGMFKV (64 aa).

Belongs to the universal ribosomal protein uS5 family. Part of the 30S ribosomal subunit. Contacts proteins S4 and S8.

Functionally, with S4 and S12 plays an important role in translational accuracy. In terms of biological role, located at the back of the 30S subunit body where it stabilizes the conformation of the head with respect to the body. In Bordetella petrii (strain ATCC BAA-461 / DSM 12804 / CCUG 43448), this protein is Small ribosomal subunit protein uS5.